A 474-amino-acid polypeptide reads, in one-letter code: MSALDVIIMAAGKGTRMKSRIPKVLQRLAGRPLLGHVLDQARGLQARRAVVVTGHGAAEVEPFIARAADGLDVRCVRQEPQLGTGHAVQQAVPALQGDGTVIVLSGDVPLTRTDTLRALVAAGGGGQLALLTVTLPDPAGYGRIVRGSDGAVRGIVEHKDATEAQRAIDEVYSGIMAVPAGLLAGWLARLTNDNAQGEYYLTDIVAMAVADGVPVVAHRIADALQVAGVNSPLQLAELERAHQLAQARALMEQGVRLADPARFDLRDDARTGVRGELACGQDVEIDVNCIFSGRVELGEGVRIGAHCCIANARIAAGAVVHPYTHIDGEQPAGVQVGEGALVGPFARLRPGAQLGREVHIGNFVEVKNSSLAEGAKANHLAYLGDATVGERVNYGAGSITANYDGANKHRTVIEADVHVGSNCVLVAPVTIGAGGTVGGGSTITKSTPAGALSVARGKQVTKENWQRPAKLPKA.

The pyrophosphorylase stretch occupies residues 1 to 232 (MSALDVIIMA…ALQVAGVNSP (232 aa)). Residues Lys23, Gln78, 83–84 (GT), 105–107 (SGD), Gly142, Glu157, and Asn230 contribute to the UDP-N-acetyl-alpha-D-glucosamine site. Asp107 contributes to the Mg(2+) binding site. Asn230 provides a ligand contact to Mg(2+). Residues 233-253 (LQLAELERAHQLAQARALMEQ) form a linker region. The tract at residues 254–474 (GVRLADPARF…WQRPAKLPKA (221 aa)) is N-acetyltransferase. Positions 349 and 367 each coordinate UDP-N-acetyl-alpha-D-glucosamine. His379 functions as the Proton acceptor in the catalytic mechanism. UDP-N-acetyl-alpha-D-glucosamine is bound by residues Tyr382 and Asn393. Residues Ala396, 402 to 403 (NY), Ser421, Gly439, and Arg456 each bind acetyl-CoA. Residues 454–474 (VARGKQVTKENWQRPAKLPKA) are disordered.

It in the N-terminal section; belongs to the N-acetylglucosamine-1-phosphate uridyltransferase family. This sequence in the C-terminal section; belongs to the transferase hexapeptide repeat family. As to quaternary structure, homotrimer. Requires Mg(2+) as cofactor.

Its subcellular location is the cytoplasm. The catalysed reaction is alpha-D-glucosamine 1-phosphate + acetyl-CoA = N-acetyl-alpha-D-glucosamine 1-phosphate + CoA + H(+). It carries out the reaction N-acetyl-alpha-D-glucosamine 1-phosphate + UTP + H(+) = UDP-N-acetyl-alpha-D-glucosamine + diphosphate. Its pathway is nucleotide-sugar biosynthesis; UDP-N-acetyl-alpha-D-glucosamine biosynthesis; N-acetyl-alpha-D-glucosamine 1-phosphate from alpha-D-glucosamine 6-phosphate (route II): step 2/2. It participates in nucleotide-sugar biosynthesis; UDP-N-acetyl-alpha-D-glucosamine biosynthesis; UDP-N-acetyl-alpha-D-glucosamine from N-acetyl-alpha-D-glucosamine 1-phosphate: step 1/1. It functions in the pathway bacterial outer membrane biogenesis; LPS lipid A biosynthesis. In terms of biological role, catalyzes the last two sequential reactions in the de novo biosynthetic pathway for UDP-N-acetylglucosamine (UDP-GlcNAc). The C-terminal domain catalyzes the transfer of acetyl group from acetyl coenzyme A to glucosamine-1-phosphate (GlcN-1-P) to produce N-acetylglucosamine-1-phosphate (GlcNAc-1-P), which is converted into UDP-GlcNAc by the transfer of uridine 5-monophosphate (from uridine 5-triphosphate), a reaction catalyzed by the N-terminal domain. The protein is Bifunctional protein GlmU of Paracidovorax citrulli (strain AAC00-1) (Acidovorax citrulli).